A 438-amino-acid chain; its full sequence is Glutamyl-tRNA(Gln) amidotransferase subunit D (438 aa).

The Asparaginase/glutaminase domain maps to 92–422 (PDVTIIGTGG…EEVRRMMLTN (331 aa)). Catalysis depends on residues threonine 102, threonine 178, aspartate 179, and lysine 256.

It belongs to the asparaginase 1 family. GatD subfamily. Heterodimer of GatD and GatE.

It catalyses the reaction L-glutamyl-tRNA(Gln) + L-glutamine + ATP + H2O = L-glutaminyl-tRNA(Gln) + L-glutamate + ADP + phosphate + H(+). Its function is as follows. Allows the formation of correctly charged Gln-tRNA(Gln) through the transamidation of misacylated Glu-tRNA(Gln) in organisms which lack glutaminyl-tRNA synthetase. The reaction takes place in the presence of glutamine and ATP through an activated gamma-phospho-Glu-tRNA(Gln). The GatDE system is specific for glutamate and does not act on aspartate. In Pyrococcus horikoshii (strain ATCC 700860 / DSM 12428 / JCM 9974 / NBRC 100139 / OT-3), this protein is Glutamyl-tRNA(Gln) amidotransferase subunit D.